Here is a 347-residue protein sequence, read N- to C-terminus: Globoside alpha-1,3-N-acetylgalactosaminyltransferase 1 (347 aa).

The Cytoplasmic portion of the chain corresponds to 1–5 (MHRRR). A helical; Signal-anchor for type II membrane protein membrane pass occupies residues 6-26 (LALGLGFCLLAGTSLSVLWVY). Topologically, residues 27–347 (LENWLPVSYV…LDKDISCLRS (321 aa)) are lumenal. Asn108 is a glycosylation site (N-linked (GlcNAc...) asparagine). Substrate contacts are provided by residues 116-121 (FAVGKY), 206-208 (DVD), and 228-231 (HPSY). Mn(2+)-binding residues include Asp206 and Asp208. Glu298 serves as the catalytic Nucleophile.

This sequence belongs to the glycosyltransferase 6 family. It depends on Mn(2+) as a cofactor. As to expression, widely expressed. Expressed at higher level in placenta, ovary and peripheral blood leukocyte, whereas it is weakly expressed in liver, thymus, and testis. Expressed in bone marrow erythroid cells.

The protein resides in the golgi apparatus membrane. It participates in protein modification; protein glycosylation. In terms of biological role, has lost the ability to synthesize Forssman glycolipid antigen (FORS1/FG). Might have acquired an alternative function in glycosphingolipid metabolism, but it remains to be established. It appears to have drifted more slowly than confirmed pseudogenes in the glycosyltransferase 6 family, suggesting that it has remained under evolutionary pressure. The chain is Globoside alpha-1,3-N-acetylgalactosaminyltransferase 1 from Homo sapiens (Human).